The following is a 358-amino-acid chain: 3-dehydroquinate synthase (358 aa).

Residues 75-80 (SGEGSK), 109-113 (GVLGD), 133-134 (TT), lysine 146, and lysine 155 each bind NAD(+). 3 residues coordinate Zn(2+): glutamate 188, histidine 245, and histidine 262.

This sequence belongs to the sugar phosphate cyclases superfamily. Dehydroquinate synthase family. It depends on Co(2+) as a cofactor. Requires Zn(2+) as cofactor. NAD(+) serves as cofactor.

Its subcellular location is the cytoplasm. It carries out the reaction 7-phospho-2-dehydro-3-deoxy-D-arabino-heptonate = 3-dehydroquinate + phosphate. It participates in metabolic intermediate biosynthesis; chorismate biosynthesis; chorismate from D-erythrose 4-phosphate and phosphoenolpyruvate: step 2/7. Its function is as follows. Catalyzes the conversion of 3-deoxy-D-arabino-heptulosonate 7-phosphate (DAHP) to dehydroquinate (DHQ). This Methylacidiphilum infernorum (isolate V4) (Methylokorus infernorum (strain V4)) protein is 3-dehydroquinate synthase.